The following is a 440-amino-acid chain: Xylose isomerase (440 aa).

Catalysis depends on residues histidine 101 and aspartate 104. Glutamate 232, glutamate 268, histidine 271, aspartate 296, aspartate 307, aspartate 309, and aspartate 339 together coordinate Mg(2+).

This sequence belongs to the xylose isomerase family. Homotetramer. Mg(2+) serves as cofactor.

The protein localises to the cytoplasm. The catalysed reaction is alpha-D-xylose = alpha-D-xylulofuranose. The polypeptide is Xylose isomerase (Escherichia coli (strain SMS-3-5 / SECEC)).